The primary structure comprises 341 residues: Tetraacyldisaccharide 4'-kinase (341 aa).

54-61 (TVGGAGKT) provides a ligand contact to ATP.

It belongs to the LpxK family.

It catalyses the reaction a lipid A disaccharide + ATP = a lipid IVA + ADP + H(+). Its pathway is glycolipid biosynthesis; lipid IV(A) biosynthesis; lipid IV(A) from (3R)-3-hydroxytetradecanoyl-[acyl-carrier-protein] and UDP-N-acetyl-alpha-D-glucosamine: step 6/6. Its function is as follows. Transfers the gamma-phosphate of ATP to the 4'-position of a tetraacyldisaccharide 1-phosphate intermediate (termed DS-1-P) to form tetraacyldisaccharide 1,4'-bis-phosphate (lipid IVA). This chain is Tetraacyldisaccharide 4'-kinase, found in Brucella melitensis biotype 1 (strain ATCC 23456 / CCUG 17765 / NCTC 10094 / 16M).